The primary structure comprises 833 residues: Leucine--tRNA ligase (833 aa).

A 'HIGH' region motif is present at residues 41–52; it reads PYPSGAGLHVGH. The 'KMSKS' region motif lies at 610–614; the sequence is KMSKS. Lysine 613 contacts ATP.

It belongs to the class-I aminoacyl-tRNA synthetase family.

It localises to the cytoplasm. The catalysed reaction is tRNA(Leu) + L-leucine + ATP = L-leucyl-tRNA(Leu) + AMP + diphosphate. The protein is Leucine--tRNA ligase of Streptococcus pyogenes serotype M4 (strain MGAS10750).